Reading from the N-terminus, the 109-residue chain is Spermidine export protein MdtI (109 aa).

The next 4 membrane-spanning stretches (helical) occupy residues 6 to 26 (WVHGAWLALAIILEIAANVLL), 36 to 56 (CYGILSLAAVLAAFSALSQAV), 64 to 84 (AYALWGGFGIAATLAAGWVLF), and 88 to 108 (LNPKGWVGVVLLLVGMIMIKL).

Belongs to the drug/metabolite transporter (DMT) superfamily. Small multidrug resistance (SMR) (TC 2.A.7.1) family. MdtI subfamily. Forms a complex with MdtJ.

The protein resides in the cell inner membrane. Its function is as follows. Catalyzes the excretion of spermidine. The sequence is that of Spermidine export protein MdtI from Salmonella arizonae (strain ATCC BAA-731 / CDC346-86 / RSK2980).